The chain runs to 833 residues: DNA polymerase I, thermostable (833 aa).

Residues 173-267 (VPPERWVDFR…FKALRRRTPD (95 aa)) form the 5'-3' exonuclease domain. Residues 412–833 (ERLFQNLFPR…GRDWLEAKQD (422 aa)) form a polymerase region.

The protein belongs to the DNA polymerase type-A family.

It carries out the reaction DNA(n) + a 2'-deoxyribonucleoside 5'-triphosphate = DNA(n+1) + diphosphate. In terms of biological role, in addition to polymerase activity, this DNA polymerase exhibits 5'-3' exonuclease activity. Unlikely to have 3'-5' exonuclease activity due to absence of a 3'-5' exonuclease domain. This chain is DNA polymerase I, thermostable (polA), found in Thermus filiformis.